Reading from the N-terminus, the 160-residue chain is uncharacterized protein (160 aa).

Positions 1 to 23 (MSIPHSVFSALLVFVALATTTLA) are cleaved as a signal peptide. The Cytoplasmic segment spans residues 24–132 (STEACLPTNK…DPNTAYWSSD (109 aa)). Residues 133-155 (LFGFYTTPTNVTVEMTGYLIWSM) traverse the membrane as a helical segment. Residues 156-160 (GNRRR) lie on the Extracellular side of the membrane.

This sequence to yeast protein FLO1.

It is found in the cell membrane. This is an uncharacterized protein from Saccharomyces cerevisiae (strain ATCC 204508 / S288c) (Baker's yeast).